A 576-amino-acid polypeptide reads, in one-letter code: Quinone-reactive Ni/Fe-hydrogenase large chain (576 aa).

Cysteine 62, cysteine 65, cysteine 547, and cysteine 550 together coordinate Ni(2+).

It belongs to the [NiFe]/[NiFeSe] hydrogenase large subunit family. In terms of assembly, heterodimer of a large and a small subunit. It depends on Ni(2+) as a cofactor.

The protein resides in the cell membrane. The enzyme catalyses H2 + a menaquinone = a menaquinol. Its function is as follows. This enzyme recycles the H(2) produced by nitrogenase to increase the production of ATP and to protect nitrogenase against inhibition or damage by O(2) under carbon- or phosphate-limited conditions. The chain is Quinone-reactive Ni/Fe-hydrogenase large chain (hydB) from Wolinella succinogenes (strain ATCC 29543 / DSM 1740 / CCUG 13145 / JCM 31913 / LMG 7466 / NCTC 11488 / FDC 602W) (Vibrio succinogenes).